The following is a 181-amino-acid chain: MRVVLLGPPGAGKGTQAEKLSEKLGIPQISTGDLFRKNIGDGTPLGLEAKRYLDAGDLVPAELTNRLVEDRIDQPDAAEGFILDGYPRSVEQAGALKDMLAARNTKLDAVLEFQVSEDELLTRLKGRGRADDTDEVIRNRMKVYREETEPLLEYYRDDLKTVNAVGALDEVFARALSALGQ.

10-15 (GAGKGT) provides a ligand contact to ATP. The tract at residues 30–59 (STGDLFRKNIGDGTPLGLEAKRYLDAGDLV) is NMP. Residues Thr-31, Arg-36, 57–59 (DLV), 85–88 (GYPR), and Gln-92 contribute to the AMP site. The tract at residues 126-132 (GRGRADD) is LID. An ATP-binding site is contributed by Arg-127. The AMP site is built by Arg-129 and Arg-140. Gly-166 contacts ATP.

The protein belongs to the adenylate kinase family. As to quaternary structure, monomer.

It is found in the cytoplasm. It carries out the reaction AMP + ATP = 2 ADP. It participates in purine metabolism; AMP biosynthesis via salvage pathway; AMP from ADP: step 1/1. Functionally, catalyzes the reversible transfer of the terminal phosphate group between ATP and AMP. Plays an important role in cellular energy homeostasis and in adenine nucleotide metabolism. The sequence is that of Adenylate kinase from Mycolicibacterium smegmatis (strain ATCC 700084 / mc(2)155) (Mycobacterium smegmatis).